We begin with the raw amino-acid sequence, 20 residues long: Unknown protein from 2D-PAGE of needles (20 aa).

The chain is Unknown protein from 2D-PAGE of needles from Pinus pinaster (Maritime pine).